A 340-amino-acid chain; its full sequence is Probable tRNA pseudouridine synthase B (340 aa).

Catalysis depends on aspartate 82, which acts as the Nucleophile. The 76-residue stretch at 250-325 (LPKVWIKDSA…IAVDVEKVFM (76 aa)) folds into the PUA domain.

The protein belongs to the pseudouridine synthase TruB family. Type 2 subfamily.

It carries out the reaction uridine(55) in tRNA = pseudouridine(55) in tRNA. In terms of biological role, could be responsible for synthesis of pseudouridine from uracil-55 in the psi GC loop of transfer RNAs. The protein is Probable tRNA pseudouridine synthase B of Pyrococcus furiosus (strain ATCC 43587 / DSM 3638 / JCM 8422 / Vc1).